An 83-amino-acid chain; its full sequence is Conotoxin Im22.1 (83 aa).

The N-terminal stretch at 1-18 (MMMRVFIAMFFLLALVEA) is a signal peptide. A propeptide spanning residues 19–26 (GWPRLYDK) is cleaved from the precursor.

This sequence belongs to the conotoxin E superfamily. In terms of processing, contain 4 disulfide bonds. In terms of tissue distribution, expressed by the venom duct.

It localises to the secreted. Its function is as follows. Probable neurotoxin. This is Conotoxin Im22.1 from Conus imperialis (Imperial cone).